A 75-amino-acid polypeptide reads, in one-letter code: Molt-inhibiting hormone (75 aa).

Intrachain disulfides connect Cys-7-Cys-44, Cys-24-Cys-40, and Cys-27-Cys-53. Position 75 is an alanine amide (Ala-75).

The protein belongs to the arthropod CHH/MIH/GIH/VIH hormone family.

The protein localises to the secreted. Its function is as follows. Inhibits Y-organs where molting hormone (ecdysteroid) is secreted. A molting cycle is initiated when MIH secretion diminishes or stops. The polypeptide is Molt-inhibiting hormone (Procambarus clarkii (Red swamp crayfish)).